The sequence spans 492 residues: 2,3-bisphosphoglycerate-independent phosphoglycerate mutase (492 aa).

Mn(2+) is bound by residues Asp-11 and Ser-61. The active-site Phosphoserine intermediate is Ser-61. Substrate is bound by residues His-118, 147–148 (RD), Arg-178, Arg-184, 248–251 (RNDR), and Lys-320. Mn(2+)-binding residues include Asp-386, His-390, Asp-427, His-428, and His-445.

The protein belongs to the BPG-independent phosphoglycerate mutase family. Monomer. It depends on Mn(2+) as a cofactor.

It catalyses the reaction (2R)-2-phosphoglycerate = (2R)-3-phosphoglycerate. It functions in the pathway carbohydrate degradation; glycolysis; pyruvate from D-glyceraldehyde 3-phosphate: step 3/5. Its function is as follows. Catalyzes the interconversion of 2-phosphoglycerate and 3-phosphoglycerate. This is 2,3-bisphosphoglycerate-independent phosphoglycerate mutase from Campylobacter jejuni subsp. jejuni serotype O:6 (strain 81116 / NCTC 11828).